The primary structure comprises 92 residues: Acylphosphatase (92 aa).

Residues 4 to 92 form the Acylphosphatase-like domain; the sequence is AVQLDVFGRV…SACHKFSVVG (89 aa). Active-site residues include Arg19 and Asn37.

This sequence belongs to the acylphosphatase family.

It catalyses the reaction an acyl phosphate + H2O = a carboxylate + phosphate + H(+). This Latilactobacillus sakei subsp. sakei (strain 23K) (Lactobacillus sakei subsp. sakei) protein is Acylphosphatase (acyP).